The chain runs to 116 residues: NADPH-dependent 7-cyano-7-deazaguanine reductase (116 aa).

Cys-31 (thioimide intermediate) is an active-site residue. The Proton donor role is filled by Asp-38. Residues 53-55 and 72-73 each bind substrate; these read VEL and YE.

It belongs to the GTP cyclohydrolase I family. QueF type 1 subfamily.

It is found in the cytoplasm. The catalysed reaction is 7-aminomethyl-7-carbaguanine + 2 NADP(+) = 7-cyano-7-deazaguanine + 2 NADPH + 3 H(+). It participates in tRNA modification; tRNA-queuosine biosynthesis. Its function is as follows. Catalyzes the NADPH-dependent reduction of 7-cyano-7-deazaguanine (preQ0) to 7-aminomethyl-7-deazaguanine (preQ1). The chain is NADPH-dependent 7-cyano-7-deazaguanine reductase from Chlorobium chlorochromatii (strain CaD3).